We begin with the raw amino-acid sequence, 707 residues long: Golgin candidate 1 (707 aa).

The Cytoplasmic portion of the chain corresponds to 1-664 (MASWLKAAED…RATRFLWRYP (664 aa)). 3 disordered regions span residues 22–106 (VVED…EIHP), 121–196 (VADT…SKRD), and 234–256 (QEPK…ADTT). Residues 38 to 47 (SGRKGSQGKR) are compositionally biased toward low complexity. The span at 56–67 (VKEESSNKRDSS) shows a compositional bias: basic and acidic residues. A compositionally biased stretch (polar residues) spans 68–80 (GDQSGPGVSQSEV). Positions 83-95 (SKSSVSTDETSSS) are enriched in low complexity. Composition is skewed to basic and acidic residues over residues 139 to 150 (DGDRSESKHADG), 185 to 196 (TQRELDDSSKRD), and 245 to 254 (LKREQDRRAD). 2 coiled-coil regions span residues 287–424 (RVCA…NATK) and 452–608 (ADER…KSRV). The chain crosses the membrane as a helical; Signal-anchor for type II membrane protein span at residues 665 to 685 (IARMFLLFYLVFVHLFLMYLI). Residues 686–707 (HRLQEQAEAQEVAAMTNNVFRL) are Lumenal-facing.

The protein resides in the golgi apparatus membrane. Its function is as follows. Golgi matrix protein playing a role in tethering of vesicles to Golgi membranes and in maintaining the overall structure of the Golgi apparatus. The polypeptide is Golgin candidate 1 (GC1) (Arabidopsis thaliana (Mouse-ear cress)).